The following is a 308-amino-acid chain: Ribosomal RNA small subunit methyltransferase H (308 aa).

S-adenosyl-L-methionine is bound by residues 34-36, Asp54, Phe85, Asp99, and Gln106; that span reads GGH.

It belongs to the methyltransferase superfamily. RsmH family.

The protein localises to the cytoplasm. It carries out the reaction cytidine(1402) in 16S rRNA + S-adenosyl-L-methionine = N(4)-methylcytidine(1402) in 16S rRNA + S-adenosyl-L-homocysteine + H(+). Specifically methylates the N4 position of cytidine in position 1402 (C1402) of 16S rRNA. This chain is Ribosomal RNA small subunit methyltransferase H, found in Dichelobacter nodosus (strain VCS1703A).